Consider the following 238-residue polypeptide: Orotidine 5'-phosphate decarboxylase (238 aa).

Substrate contacts are provided by residues D10, K32, 59–68 (DLKLHDIPNT), T122, R184, Q193, G213, and R214. Catalysis depends on K61, which acts as the Proton donor.

It belongs to the OMP decarboxylase family. Type 1 subfamily. Homodimer.

It catalyses the reaction orotidine 5'-phosphate + H(+) = UMP + CO2. It participates in pyrimidine metabolism; UMP biosynthesis via de novo pathway; UMP from orotate: step 2/2. Its function is as follows. Catalyzes the decarboxylation of orotidine 5'-monophosphate (OMP) to uridine 5'-monophosphate (UMP). This chain is Orotidine 5'-phosphate decarboxylase, found in Bacillus cereus (strain ATCC 10987 / NRS 248).